Reading from the N-terminus, the 348-residue chain is Phosphatidylglycerophosphate phosphatase 1, chloroplastic/mitochondrial (348 aa).

The N-terminal 58 residues, 1–58 (MQTPSMAASTTSYYPIPKSFLLSPPRHKRNPNLISCSTKPICSPPPPSSSSSSPLQTT), are a transit peptide targeting the chloroplast and mitochondrion. The tract at residues 17–67 (PKSFLLSPPRHKRNPNLISCSTKPICSPPPPSSSSSSPLQTTTTHRSQKQN) is disordered. The span at 55 to 67 (LQTTTTHRSQKQN) shows a compositional bias: polar residues. Residues 184-188 (DKDNT) carry the Phosphoryl acceptor motif.

It belongs to the HAD-like hydrolase superfamily. Mg(2+) is required as a cofactor. In terms of tissue distribution, mainly expressed in inflorescences (especially in pollen) and, to a lower extent, in leaves, stems and siliques, as well as, at low levels, in roots. Mostly expressed in hypocotyl, vasculatures, trichomes, guard cells and stigmas.

The protein resides in the plastid. Its subcellular location is the chloroplast. It localises to the mitochondrion. The enzyme catalyses a 1,2-diacyl-sn-glycero-3-phospho-(1'-sn-glycero-3'-phosphate) + H2O = a 1,2-diacyl-sn-glycero-3-phospho-(1'-sn-glycerol) + phosphate. The protein operates within phospholipid metabolism; phosphatidylglycerol biosynthesis; phosphatidylglycerol from CDP-diacylglycerol: step 2/2. Phosphatidylglycerophosphate (PGP) phosphatase involved in the biosynthesis of phosphatidylglycerol (PG), a phosphoglycerolipid predominantly present in chloroplastic thylakoid membranes and which has important photosynthetic function; seems to use PGP 34:3, PGP 34:2 and PGP 34:1 as substrates. Required for thylakoid membranes development and chloroplast function. Necessary for normal cell growth. Required for root growth and columella cells organization. The polypeptide is Phosphatidylglycerophosphate phosphatase 1, chloroplastic/mitochondrial (Arabidopsis thaliana (Mouse-ear cress)).